The primary structure comprises 216 residues: Pyridoxine/pyridoxamine 5'-phosphate oxidase (216 aa).

Residues 12–15 and K70 contribute to the substrate site; that span reads RKSY. FMN-binding positions include 65–70, 80–81, R86, and K87; these read RVVLVK and FT. Positions 127, 131, and 135 each coordinate substrate. FMN is bound by residues 144 to 145 and W188; that span reads QS. Residue 194–196 coordinates substrate; the sequence is RLH. R198 serves as a coordination point for FMN.

The protein belongs to the pyridoxamine 5'-phosphate oxidase family. In terms of assembly, homodimer. FMN is required as a cofactor.

It catalyses the reaction pyridoxamine 5'-phosphate + O2 + H2O = pyridoxal 5'-phosphate + H2O2 + NH4(+). The catalysed reaction is pyridoxine 5'-phosphate + O2 = pyridoxal 5'-phosphate + H2O2. It participates in cofactor metabolism; pyridoxal 5'-phosphate salvage; pyridoxal 5'-phosphate from pyridoxamine 5'-phosphate: step 1/1. Its pathway is cofactor metabolism; pyridoxal 5'-phosphate salvage; pyridoxal 5'-phosphate from pyridoxine 5'-phosphate: step 1/1. Catalyzes the oxidation of either pyridoxine 5'-phosphate (PNP) or pyridoxamine 5'-phosphate (PMP) into pyridoxal 5'-phosphate (PLP). The chain is Pyridoxine/pyridoxamine 5'-phosphate oxidase from Polaromonas sp. (strain JS666 / ATCC BAA-500).